An 89-amino-acid polypeptide reads, in one-letter code: Mitochondrial import inner membrane translocase subunit Tim9 (89 aa).

A2 is modified (N-acetylalanine). The Twin CX3C motif signature appears at 28–52 (CFLDCVKDFTTREVKPEEVTCSEHC). 2 cysteine pairs are disulfide-bonded: C28–C52 and C32–C48.

The protein belongs to the small Tim family. As to quaternary structure, heterohexamer; composed of 3 copies of TIMM9 and 3 copies of TIMM10/TIM10A, named soluble 70 kDa complex. The complex forms a 6-bladed alpha-propeller structure and associates with the TIMM22 component of the TIM22 complex. Interacts with multi-pass transmembrane proteins in transit. Also forms a complex composed of TIMM9, TIMM10/TIM10A and FXC1/TIM10B.

The protein localises to the mitochondrion inner membrane. In terms of biological role, mitochondrial intermembrane chaperone that participates in the import and insertion of multi-pass transmembrane proteins into the mitochondrial inner membrane. May also be required for the transfer of beta-barrel precursors from the TOM complex to the sorting and assembly machinery (SAM complex) of the outer membrane. Acts as a chaperone-like protein that protects the hydrophobic precursors from aggregation and guide them through the mitochondrial intermembrane space. This chain is Mitochondrial import inner membrane translocase subunit Tim9 (Timm9), found in Rattus norvegicus (Rat).